Reading from the N-terminus, the 270-residue chain is Glucosamine-6-phosphate deaminase (270 aa).

Residue Asp-72 is the Proton acceptor; for enolization step of the active site. Asp-141 functions as the For ring-opening step in the catalytic mechanism. Residue His-143 is the Proton acceptor; for ring-opening step of the active site. The active-site For ring-opening step is the Glu-148.

It belongs to the glucosamine/galactosamine-6-phosphate isomerase family. NagB subfamily. As to quaternary structure, homohexamer.

The catalysed reaction is alpha-D-glucosamine 6-phosphate + H2O = beta-D-fructose 6-phosphate + NH4(+). The protein operates within amino-sugar metabolism; N-acetylneuraminate degradation; D-fructose 6-phosphate from N-acetylneuraminate: step 5/5. Its activity is regulated as follows. Allosterically activated by N-acetylglucosamine 6-phosphate (GlcNAc6P). Its function is as follows. Catalyzes the reversible isomerization-deamination of glucosamine 6-phosphate (GlcN6P) to form fructose 6-phosphate (Fru6P) and ammonium ion. The polypeptide is Glucosamine-6-phosphate deaminase (Photorhabdus laumondii subsp. laumondii (strain DSM 15139 / CIP 105565 / TT01) (Photorhabdus luminescens subsp. laumondii)).